Consider the following 198-residue polypeptide: Peptidyl-tRNA hydrolase (198 aa).

Tyr-14 provides a ligand contact to tRNA. The active-site Proton acceptor is His-19. Residues Tyr-64, Asn-66, and Asn-113 each contribute to the tRNA site.

The protein belongs to the PTH family. In terms of assembly, monomer.

It is found in the cytoplasm. The enzyme catalyses an N-acyl-L-alpha-aminoacyl-tRNA + H2O = an N-acyl-L-amino acid + a tRNA + H(+). Its function is as follows. Hydrolyzes ribosome-free peptidyl-tRNAs (with 1 or more amino acids incorporated), which drop off the ribosome during protein synthesis, or as a result of ribosome stalling. In terms of biological role, catalyzes the release of premature peptidyl moieties from peptidyl-tRNA molecules trapped in stalled 50S ribosomal subunits, and thus maintains levels of free tRNAs and 50S ribosomes. The sequence is that of Peptidyl-tRNA hydrolase from Acidobacterium capsulatum (strain ATCC 51196 / DSM 11244 / BCRC 80197 / JCM 7670 / NBRC 15755 / NCIMB 13165 / 161).